The sequence spans 382 residues: Lipid-A-disaccharide synthase (382 aa).

Belongs to the LpxB family.

The catalysed reaction is 2-N,3-O-bis[(3R)-3-hydroxytetradecanoyl]-alpha-D-glucosaminyl 1-phosphate + UDP-2-N,3-O-bis[(3R)-3-hydroxytetradecanoyl]-alpha-D-glucosamine = lipid A disaccharide (E. coli) + UDP + H(+). It catalyses the reaction a lipid X + a UDP-2-N,3-O-bis[(3R)-3-hydroxyacyl]-alpha-D-glucosamine = a lipid A disaccharide + UDP + H(+). The protein operates within glycolipid biosynthesis; lipid IV(A) biosynthesis; lipid IV(A) from (3R)-3-hydroxytetradecanoyl-[acyl-carrier-protein] and UDP-N-acetyl-alpha-D-glucosamine: step 5/6. Functionally, condensation of UDP-2,3-diacylglucosamine and 2,3-diacylglucosamine-1-phosphate to form lipid A disaccharide, a precursor of lipid A, a phosphorylated glycolipid that anchors the lipopolysaccharide to the outer membrane of the cell. The protein is Lipid-A-disaccharide synthase of Escherichia coli (strain ATCC 8739 / DSM 1576 / NBRC 3972 / NCIMB 8545 / WDCM 00012 / Crooks).